The primary structure comprises 843 residues: MRERKETAMSDKEKKGAGAGAQVAPAMGPPVLINKEDIPAVLPILPLRNSVFFPGGVLPLAVGRQKTIALIKDAVRDEQVIGVVTQRRAEEEDPGAADLYTVGTVARVVKLLKMGEDNYSLVVQGLARFKVLELVQESPYLKARIEAVEDRSVVDDVEVEALAINLKKLAREVIELMPELPAAATELVESITHPGHLADLIAANVDVPIEEKQQVLETVELKARMKLVLELLNRKREILKLSNKIDSAVKGEMSKTQREYYLRQQLKAIKEELGELGEEEEELDELQERLKKAGLPPEVEKVAQKELNRLKSIPTASSEYTVARTYLDWIADLPWTKRTDDNLDIENARQILDTDHYGLDKIKKRILEYLAVRKLKNDMRGPILCFVGPPGVGKTSLGQSIARATGRKFVRLSLGGVRDEAEIRGHRRTYVGALPGRIIQSMKKAATVNPVMMLDEIDKLGADFRGDPSAALLEVLDPEQNHAFSDHYLDLSYDLSKVMFIGTANLLDPIPGPLKDRMEILELPGYTFEEKVHIAQNHLIPKQLREHGLSADAIAISEKALIKIIMAYTREAGVRNLERRIADVCRAIAVEVASGKIGASAKRSIEEADVLEILGPEKFYNETAERTEIAGVATGLAWTAAGGDILFIEATKMPGKGALTLTGQLGDVMKESAQAALSYLRSKSDSLGIPVNFLEKTDLHIHFPAGAIPKDGPSAGVTILTALVSLLTGIRVRSDVAMTGEVTLRGLVLPVGGIKEKVLAAHRAGIKRIIIPARNEKDLLDVPEQARKELEFVFAAHMDEVLQAALEENPVGRKPPAAPEPEGEKKPGATPTPPAKKPDEIRV.

A compositionally biased stretch (basic and acidic residues) spans 1-16; it reads MRERKETAMSDKEKKG. The tract at residues 1 to 22 is disordered; sequence MRERKETAMSDKEKKGAGAGAQ. The region spanning 42–236 is the Lon N-terminal domain; that stretch reads LPILPLRNSV…LVLELLNRKR (195 aa). 388–395 lines the ATP pocket; that stretch reads GPPGVGKT. Positions 627–808 constitute a Lon proteolytic domain; the sequence is TEIAGVATGL…DEVLQAALEE (182 aa). Residues serine 714 and lysine 757 contribute to the active site. The interval 805–843 is disordered; that stretch reads ALEENPVGRKPPAAPEPEGEKKPGATPTPPAKKPDEIRV.

The protein belongs to the peptidase S16 family. As to quaternary structure, homohexamer. Organized in a ring with a central cavity.

The protein resides in the cytoplasm. The catalysed reaction is Hydrolysis of proteins in presence of ATP.. Functionally, ATP-dependent serine protease that mediates the selective degradation of mutant and abnormal proteins as well as certain short-lived regulatory proteins. Required for cellular homeostasis and for survival from DNA damage and developmental changes induced by stress. Degrades polypeptides processively to yield small peptide fragments that are 5 to 10 amino acids long. Binds to DNA in a double-stranded, site-specific manner. The sequence is that of Lon protease from Anaeromyxobacter dehalogenans (strain 2CP-C).